A 129-amino-acid chain; its full sequence is MRITQGCFSFLPDLTDEQITAQVEYCLGRGWAIGVEYTDDPHPRNTYWEMWGNPMFDLRDAKGVMMEVEDCRKAHPQDYIRLNAFDSSRGLETVTMSFIVNRPENEPSLRMTRTESDGRSQHYTWETQR.

The span at 104-120 shows a compositional bias: basic and acidic residues; sequence ENEPSLRMTRTESDGRS. Residues 104-129 form a disordered region; the sequence is ENEPSLRMTRTESDGRSQHYTWETQR.

Belongs to the RuBisCO small chain family. Heterohexadecamer of 8 large and 8 small subunits.

RuBisCO catalyzes two reactions: the carboxylation of D-ribulose 1,5-bisphosphate, the primary event in carbon dioxide fixation, as well as the oxidative fragmentation of the pentose substrate. Both reactions occur simultaneously and in competition at the same active site. Although the small subunit is not catalytic it is essential for maximal activity. In Sinorhizobium medicae (strain WSM419) (Ensifer medicae), this protein is Ribulose bisphosphate carboxylase small subunit.